The sequence spans 190 residues: MTYEIQASVREAQGTGASRRLRREGQIPGILYGEGQEPVAIAVDHKTVFYALEKESFHTALIKLSLNGETKDVIVRDFQMHPFRREVQHIDFQAVKADQLVRIRVPLHIVNAENSQAVKLQGGRVSLLNTSVEVVALPANIPAFLDLDCAEVVAGDILHLSDIKLPEGVESVSLKRNENLAVATVTGKKR.

Belongs to the bacterial ribosomal protein bL25 family. CTC subfamily. In terms of assembly, part of the 50S ribosomal subunit; part of the 5S rRNA/L5/L18/L25 subcomplex. Contacts the 5S rRNA. Binds to the 5S rRNA independently of L5 and L18.

Its function is as follows. This is one of the proteins that binds to the 5S RNA in the ribosome where it forms part of the central protuberance. This chain is Large ribosomal subunit protein bL25, found in Neisseria meningitidis serogroup C (strain 053442).